Here is a 244-residue protein sequence, read N- to C-terminus: 5-oxoprolinase subunit A (244 aa).

Belongs to the LamB/PxpA family. Forms a complex composed of PxpA, PxpB and PxpC.

The enzyme catalyses 5-oxo-L-proline + ATP + 2 H2O = L-glutamate + ADP + phosphate + H(+). Its function is as follows. Catalyzes the cleavage of 5-oxoproline to form L-glutamate coupled to the hydrolysis of ATP to ADP and inorganic phosphate. In Salmonella newport (strain SL254), this protein is 5-oxoprolinase subunit A.